Consider the following 400-residue polypeptide: Argininosuccinate synthase (400 aa).

Residue 10 to 18 participates in ATP binding; sequence AFSGGLDTT. Tyr87 is an L-citrulline binding site. Gly117 serves as a coordination point for ATP. Residues Thr119, Asn123, and Asp124 each coordinate L-aspartate. Asn123 contacts L-citrulline. The L-citrulline site is built by Arg127, Ser173, Ser182, Glu255, and Tyr267.

The protein belongs to the argininosuccinate synthase family. Type 1 subfamily. In terms of assembly, homotetramer.

The protein localises to the cytoplasm. It catalyses the reaction L-citrulline + L-aspartate + ATP = 2-(N(omega)-L-arginino)succinate + AMP + diphosphate + H(+). The protein operates within amino-acid biosynthesis; L-arginine biosynthesis; L-arginine from L-ornithine and carbamoyl phosphate: step 2/3. This chain is Argininosuccinate synthase, found in Natronomonas pharaonis (strain ATCC 35678 / DSM 2160 / CIP 103997 / JCM 8858 / NBRC 14720 / NCIMB 2260 / Gabara) (Halobacterium pharaonis).